A 460-amino-acid polypeptide reads, in one-letter code: GTPase Der (460 aa).

EngA-type G domains follow at residues 3 to 167 and 189 to 364; these read FTFA…PEPD and IRVA…AVWN. Residues 9-16, 56-60, 119-122, 195-202, 242-246, and 307-310 each bind GTP; these read GRPNVGKS, DTAGL, NKSE, GRPNAGKS, and NKWD. Positions 365-449 constitute a KH-like domain; the sequence is TRVPTAALNR…PVRIMLREKA (85 aa).

Belongs to the TRAFAC class TrmE-Era-EngA-EngB-Septin-like GTPase superfamily. EngA (Der) GTPase family. In terms of assembly, associates with the 50S ribosomal subunit.

In terms of biological role, GTPase that plays an essential role in the late steps of ribosome biogenesis. The polypeptide is GTPase Der (Rhodopseudomonas palustris (strain BisB5)).